The chain runs to 257 residues: UPF0246 protein AHA_3667 (257 aa).

The protein belongs to the UPF0246 family.

This is UPF0246 protein AHA_3667 from Aeromonas hydrophila subsp. hydrophila (strain ATCC 7966 / DSM 30187 / BCRC 13018 / CCUG 14551 / JCM 1027 / KCTC 2358 / NCIMB 9240 / NCTC 8049).